Here is a 169-residue protein sequence, read N- to C-terminus: MEVHMLSKDNKKSIRKTLEQRRGEYAYYVIKEVADLNDKQLEEKYASLVKKAPVMILSNGLLQTLAFLLAKAETSPEKANQILSRVNEYPPRFIEKLGNDKDEHLLLYLHIVYWLRENVDRNIDVKTLLSQDYSKVLWATKEAIALLNWMRRFAVAMLKEEGKENEGSS.

Belongs to the CRISPR system Cmr5 family. In terms of assembly, monomer in isolation. Part of the type III-B Cmr ribonucleoprotein (RNP) complex, an elongated RNP with Cmr2 and Cmr3 as the base, with Cmr4 and Cmr5 forming a helical core along the mature crRNA (39 or 45 nt in length), while the complex is capped by Cmr6 and Cmr1. The 5' end of the crRNA is bound to Cmr2 and Cmr3, while Cmr6 and a Cmr1 subunit (Cmr1-1 or Cmr1-2) cap the 3' end of the crRNA. The target RNA lies antiparallel to the crRNA, with its 5' end near Cmr1 and Cmr6 and its 3' end near Cmr2 and Cmr3; major target cleavage occurs nears the junction of Cmr1/Cmr6 and Cmr4/Cmr, with minor cleavage occurring at 6 nt intervals which coincide with the proposed spacing of Cmr4 subunits. Interacts with Cmr4. Interacts with Cmr2, Cmr4 and Cmr6.

The protein resides in the cytoplasm. Its function is as follows. CRISPR (clustered regularly interspaced short palindromic repeat), is an adaptive immune system that provides protection against mobile genetic elements (viruses, transposable elements and conjugative plasmids). CRISPR clusters contain sequences complementary to antecedent mobile elements and target invading nucleic acids. CRISPR clusters are transcribed and processed into CRISPR RNA (crRNA), formerly called psiRNA (prokaryotic silencing) in this organism. Part of the Cmr ribonucleoprotein complex which has divalent cation-dependent endoribonuclease activity specific for ssRNA complementary to the crRNA (target NRA), generating 5' hydroxy- and 3' phosphate or 2'-3' cyclic phosphate termini. Cmr4 is probably the subunit that cleaves target RNA. Cmr complex does not cleave ssDNA complementary to the crRNA. Cleavage of invading RNA is guided by the crRNA; substrate cleavage occurs a fixed distance (14 nt) from the 3' end of the crRNA. In vitro reconstitution shows Cmr1-2 and Cmr5 are not absolutely necessary for target cleavage. This chain is CRISPR system Cmr subunit Cmr5, found in Pyrococcus furiosus (strain ATCC 43587 / DSM 3638 / JCM 8422 / Vc1).